The chain runs to 177 residues: Acireductone dioxygenase (177 aa).

Fe(2+)-binding residues include His99, His101, Glu105, and His143. Positions 99, 101, 105, and 143 each coordinate Ni(2+).

Belongs to the acireductone dioxygenase (ARD) family. In terms of assembly, monomer. Fe(2+) is required as a cofactor. Requires Ni(2+) as cofactor.

The catalysed reaction is 1,2-dihydroxy-5-(methylsulfanyl)pent-1-en-3-one + O2 = 3-(methylsulfanyl)propanoate + CO + formate + 2 H(+). It catalyses the reaction 1,2-dihydroxy-5-(methylsulfanyl)pent-1-en-3-one + O2 = 4-methylsulfanyl-2-oxobutanoate + formate + 2 H(+). It participates in amino-acid biosynthesis; L-methionine biosynthesis via salvage pathway; L-methionine from S-methyl-5-thio-alpha-D-ribose 1-phosphate: step 5/6. Its function is as follows. Catalyzes 2 different reactions between oxygen and the acireductone 1,2-dihydroxy-3-keto-5-methylthiopentene (DHK-MTPene) depending upon the metal bound in the active site. Fe-containing acireductone dioxygenase (Fe-ARD) produces formate and 2-keto-4-methylthiobutyrate (KMTB), the alpha-ketoacid precursor of methionine in the methionine recycle pathway. Ni-containing acireductone dioxygenase (Ni-ARD) produces methylthiopropionate, carbon monoxide and formate, and does not lie on the methionine recycle pathway. This Leptospira borgpetersenii serovar Hardjo-bovis (strain L550) protein is Acireductone dioxygenase.